A 473-amino-acid polypeptide reads, in one-letter code: Ribulose bisphosphate carboxylase large chain (473 aa).

The propeptide occupies 1–2 (MS). Substrate contacts are provided by Asn123 and Thr173. Lys175 serves as the catalytic Proton acceptor. Substrate is bound at residue Lys177. Mg(2+)-binding residues include Lys201, Asp203, and Glu204. Position 201 is an N6-carboxylysine (Lys201). Ser208 is modified (phosphoserine). His294 (proton acceptor) is an active-site residue. Substrate is bound by residues Arg295 and His327. The residue at position 330 (Thr330) is a Phosphothreonine. Ser379 is a binding site for substrate.

Belongs to the RuBisCO large chain family. Type I subfamily. As to quaternary structure, heterohexadecamer of 8 large chains and 8 small chains; disulfide-linked. The disulfide link is formed within the large subunit homodimers. Mg(2+) serves as cofactor. The disulfide bond which can form in the large chain dimeric partners within the hexadecamer appears to be associated with oxidative stress and protein turnover.

Its subcellular location is the plastid. The protein localises to the chloroplast. It carries out the reaction 2 (2R)-3-phosphoglycerate + 2 H(+) = D-ribulose 1,5-bisphosphate + CO2 + H2O. The enzyme catalyses D-ribulose 1,5-bisphosphate + O2 = 2-phosphoglycolate + (2R)-3-phosphoglycerate + 2 H(+). RuBisCO catalyzes two reactions: the carboxylation of D-ribulose 1,5-bisphosphate, the primary event in carbon dioxide fixation, as well as the oxidative fragmentation of the pentose substrate in the photorespiration process. Both reactions occur simultaneously and in competition at the same active site. The sequence is that of Ribulose bisphosphate carboxylase large chain from Sinapis alba (White mustard).